Consider the following 143-residue polypeptide: Large ribosomal subunit protein uL11 (143 aa).

The protein belongs to the universal ribosomal protein uL11 family. As to quaternary structure, part of the ribosomal stalk of the 50S ribosomal subunit. Interacts with L10 and the large rRNA to form the base of the stalk. L10 forms an elongated spine to which L12 dimers bind in a sequential fashion forming a multimeric L10(L12)X complex. Post-translationally, one or more lysine residues are methylated.

Its function is as follows. Forms part of the ribosomal stalk which helps the ribosome interact with GTP-bound translation factors. This is Large ribosomal subunit protein uL11 from Ralstonia nicotianae (strain ATCC BAA-1114 / GMI1000) (Ralstonia solanacearum).